The chain runs to 199 residues: MKQSHFFAHLSRLKLINRWPLMRNVRTENVSEHSLQVAMVAHALAAIKNRKFGGNVNAERIALLAMYHDASEVLTGDLPTPVKYFNSQIAQEYKAIEKIAQQKLVDMVPEELQDIFAPLIDEHAYSDEEKSLVKQADALCAYLKCLEELAAGNNEFLLAKTRLEATLEARRSQEMDYFMEVFVPSFHLSLDEISQDSPL.

Residues Arg18 to Trp19 and His33 contribute to the substrate site. The region spanning Val30–Tyr142 is the HD domain. His33, His68, and Asp69 together coordinate a divalent metal cation. Residues Asp69, Asp77–Thr80, and Asp137 contribute to the substrate site. Position 137 (Asp137) interacts with a divalent metal cation.

Belongs to the 5DNU family. Homodimer. A divalent metal cation serves as cofactor.

It is found in the cytoplasm. The catalysed reaction is a 2'-deoxyribonucleoside 5'-phosphate + H2O = a 2'-deoxyribonucleoside + phosphate. Functionally, catalyzes the strictly specific dephosphorylation of 2'-deoxyribonucleoside 5'-monophosphates. This is 5'-deoxynucleotidase YfbR from Escherichia coli O45:K1 (strain S88 / ExPEC).